Consider the following 491-residue polypeptide: Probable glycine dehydrogenase (decarboxylating) subunit 2 (491 aa).

Lys-274 carries the N6-(pyridoxal phosphate)lysine modification.

The protein belongs to the GcvP family. C-terminal subunit subfamily. The glycine cleavage system is composed of four proteins: P, T, L and H. In this organism, the P 'protein' is a heterodimer of two subunits. The cofactor is pyridoxal 5'-phosphate.

It catalyses the reaction N(6)-[(R)-lipoyl]-L-lysyl-[glycine-cleavage complex H protein] + glycine + H(+) = N(6)-[(R)-S(8)-aminomethyldihydrolipoyl]-L-lysyl-[glycine-cleavage complex H protein] + CO2. The glycine cleavage system catalyzes the degradation of glycine. The P protein binds the alpha-amino group of glycine through its pyridoxal phosphate cofactor; CO(2) is released and the remaining methylamine moiety is then transferred to the lipoamide cofactor of the H protein. This is Probable glycine dehydrogenase (decarboxylating) subunit 2 from Shouchella clausii (strain KSM-K16) (Alkalihalobacillus clausii).